The following is a 548-amino-acid chain: Stretch-activated cation channel MID1 (548 aa).

An N-terminal signal peptide occupies residues 1–20 (MIVWQALFVVYCLFTTSIHG). The Extracellular portion of the chain corresponds to 21 to 341 (LFQDFNPFAN…YLTKKISNGD (321 aa)). 13 N-linked (GlcNAc...) asparagine glycosylation sites follow: asparagine 32, asparagine 70, asparagine 112, asparagine 125, asparagine 159, asparagine 175, asparagine 228, asparagine 238, asparagine 265, asparagine 282, asparagine 285, asparagine 291, and asparagine 324. Residues 342-358 (GLSSVGGILFSHVYFTT) form a helical membrane-spanning segment. Topologically, residues 359–548 (RSTDVCSLIF…LMVIHPLDDT (190 aa)) are cytoplasmic.

Forms an oligomer with a molecular mass of 200 kDa by disulfide bonds. Interacts with CCH1 to form a Ca(2+) influx channel. Post-translationally, N-glycosylated.

The protein localises to the cell membrane. Its function is as follows. Calcium-permeable, cation-selective stretch-activated channel (SAC) that functions together with CCH1 to mediate calcium entry into cells. Required during mating. Together with CCH1, essential for tolerance to iron stress, which leads to an increased oxidative poise, and to cold stress. This chain is Stretch-activated cation channel MID1 (MID1), found in Saccharomyces cerevisiae (strain ATCC 204508 / S288c) (Baker's yeast).